The primary structure comprises 508 residues: Serine/threonine protein kinase OSK3 (508 aa).

Residues Y17 to F269 enclose the Protein kinase domain. Residues L23–V31 and K46 contribute to the ATP site. Residue D140 is the Proton acceptor of the active site. A UBA domain is found at M290–D330. Residues N459–V507 form the KA1 domain.

Belongs to the protein kinase superfamily. Ser/Thr protein kinase family. Interacts with HDR1. As to expression, strongly expressed in immature seeds. Mostly expressed in panicles, and to a lower extent, in leaf sheaths.

It localises to the nucleus. It carries out the reaction L-seryl-[protein] + ATP = O-phospho-L-seryl-[protein] + ADP + H(+). The catalysed reaction is L-threonyl-[protein] + ATP = O-phospho-L-threonyl-[protein] + ADP + H(+). The sequence is that of Serine/threonine protein kinase OSK3 from Oryza sativa subsp. indica (Rice).